Reading from the N-terminus, the 222-residue chain is Glutathione S-transferase A2 (222 aa).

At Ala-2 the chain carries N-acetylalanine. Positions 3-83 constitute a GST N-terminal domain; the sequence is GKPVLHYFNA…YIATKYDLYG (81 aa). At Lys-4 the chain carries N6-succinyllysine. Glutathione is bound by residues Tyr-9, Lys-45, 54 to 55, and 67 to 68; these read QV and QT. Positions 85–208 constitute a GST C-terminal domain; sequence DMKERALIDM…HPGSQRKPPL (124 aa).

Belongs to the GST superfamily. Alpha family. Homodimer. Heterodimer of GSTA1 and GSTA2. Expressed in the kidney.

The catalysed reaction is RX + glutathione = an S-substituted glutathione + a halide anion + H(+). In terms of biological role, catalyzes the conjugation of glutathione to a large variety of electrophilic compounds. The polypeptide is Glutathione S-transferase A2 (Gsta2) (Mus musculus (Mouse)).